The chain runs to 1176 residues: Pesticidal crystal protein Cry1Aa (1176 aa).

It belongs to the delta endotoxin family.

Promotes colloidosmotic lysis by binding to the midgut epithelial cells of many lepidopteran larvae. The protein is Pesticidal crystal protein Cry1Aa (cry1Aa) of Bacillus thuringiensis subsp. aizawai.